We begin with the raw amino-acid sequence, 457 residues long: Siroheme synthase (457 aa).

Residues 4–202 are precorrin-2 dehydrogenase /sirohydrochlorin ferrochelatase; sequence LPIFCQLRDR…ANADEKAVNA (199 aa). NAD(+) is bound by residues 22–23 and 43–44; these read DV and LT. Position 128 is a phosphoserine (S128). The segment at 216–448 is uroporphyrinogen-III C-methyltransferase; that stretch reads GEVVLVGAGP…IIVGRVVALR (233 aa). S-adenosyl-L-methionine is bound at residue P225. D248 (proton acceptor) is an active-site residue. K270 (proton donor) is an active-site residue. S-adenosyl-L-methionine contacts are provided by residues 301–303, I306, 331–332, M382, G411, and A437; these read GGD and TA.

The protein in the N-terminal section; belongs to the precorrin-2 dehydrogenase / sirohydrochlorin ferrochelatase family. This sequence in the C-terminal section; belongs to the precorrin methyltransferase family. In terms of assembly, homodimer.

It catalyses the reaction uroporphyrinogen III + 2 S-adenosyl-L-methionine = precorrin-2 + 2 S-adenosyl-L-homocysteine + H(+). It carries out the reaction precorrin-2 + NAD(+) = sirohydrochlorin + NADH + 2 H(+). The catalysed reaction is siroheme + 2 H(+) = sirohydrochlorin + Fe(2+). It functions in the pathway cofactor biosynthesis; adenosylcobalamin biosynthesis; precorrin-2 from uroporphyrinogen III: step 1/1. Its pathway is cofactor biosynthesis; adenosylcobalamin biosynthesis; sirohydrochlorin from precorrin-2: step 1/1. It participates in porphyrin-containing compound metabolism; siroheme biosynthesis; precorrin-2 from uroporphyrinogen III: step 1/1. The protein operates within porphyrin-containing compound metabolism; siroheme biosynthesis; siroheme from sirohydrochlorin: step 1/1. It functions in the pathway porphyrin-containing compound metabolism; siroheme biosynthesis; sirohydrochlorin from precorrin-2: step 1/1. Functionally, multifunctional enzyme that catalyzes the SAM-dependent methylations of uroporphyrinogen III at position C-2 and C-7 to form precorrin-2 via precorrin-1. Then it catalyzes the NAD-dependent ring dehydrogenation of precorrin-2 to yield sirohydrochlorin. Finally, it catalyzes the ferrochelation of sirohydrochlorin to yield siroheme. This is Siroheme synthase from Salmonella typhimurium (strain LT2 / SGSC1412 / ATCC 700720).